Reading from the N-terminus, the 130-residue chain is Histone H2A type 2 (130 aa).

A disordered region spans residues 1-22; the sequence is MSGRGKQGGKTRAKSKTRSSRA. Position 2 is an N-acetylserine (serine 2). Serine 2 is subject to Phosphoserine. At lysine 6 the chain carries N6-(2-hydroxyisobutyryl)lysine. Position 6 is an N6-acetyllysine (lysine 6). The span at 7-19 shows a compositional bias: basic residues; the sequence is QGGKTRAKSKTRS. Lysine 10 carries the post-translational modification N6-(2-hydroxyisobutyryl)lysine; alternate. Residue lysine 10 is modified to N6-lactoyllysine; alternate. Position 10 is an N6-succinyllysine (lysine 10). Glycyl lysine isopeptide (Lys-Gly) (interchain with G-Cter in ubiquitin) cross-links involve residues lysine 14 and lysine 16. Lysine 37 is subject to N6-(2-hydroxyisobutyryl)lysine; alternate. Lysine 76 carries the post-translational modification N6-(2-hydroxyisobutyryl)lysine. At lysine 96 the chain carries N6-(2-hydroxyisobutyryl)lysine; alternate. Lysine 96 is modified (N6-succinyllysine). Residue lysine 96 is modified to N6-glutaryllysine; alternate. Glutamine 105 is subject to N5-methylglutamine. N6-(2-hydroxyisobutyryl)lysine; alternate is present on lysine 119. Lysine 119 is subject to N6-glutaryllysine; alternate. Residue lysine 120 forms a Glycyl lysine isopeptide (Lys-Gly) (interchain with G-Cter in ubiquitin) linkage.

The protein belongs to the histone H2A family. As to quaternary structure, the nucleosome is a histone octamer containing two molecules each of H2A, H2B, H3 and H4 assembled in one H3-H4 heterotetramer and two H2A-H2B heterodimers. The octamer wraps approximately 147 bp of DNA. Post-translationally, monoubiquitination of Lys-120 (H2AK119Ub) gives a specific tag for epigenetic transcriptional repression. Following DNA double-strand breaks (DSBs), it is ubiquitinated through 'Lys-63' linkage of ubiquitin moieties, leading to the recruitment of repair proteins to sites of DNA damage. H2AK119Ub and ionizing radiation-induced 'Lys-63'-linked ubiquitination are distinct events. In terms of processing, phosphorylation on Ser-2 is enhanced during mitosis. Phosphorylation on Ser-2 directly represses transcription. Glutamine methylation at Gln-105 (H2AQ104me) by FBL is specifically dedicated to polymerase I. It is present at 35S ribosomal DNA locus and impairs binding of the FACT complex.

The protein localises to the nucleus. Its subcellular location is the chromosome. Functionally, core component of nucleosome. Nucleosomes wrap and compact DNA into chromatin, limiting DNA accessibility to the cellular machineries which require DNA as a template. Histones thereby play a central role in transcription regulation, DNA repair, DNA replication and chromosomal stability. DNA accessibility is regulated via a complex set of post-translational modifications of histones, also called histone code, and nucleosome remodeling. The polypeptide is Histone H2A type 2 (Xenopus laevis (African clawed frog)).